Here is a 158-residue protein sequence, read N- to C-terminus: Endoribonuclease YbeY (158 aa).

His120, His124, and His130 together coordinate Zn(2+).

Belongs to the endoribonuclease YbeY family. The cofactor is Zn(2+).

The protein resides in the cytoplasm. Functionally, single strand-specific metallo-endoribonuclease involved in late-stage 70S ribosome quality control and in maturation of the 3' terminus of the 16S rRNA. The protein is Endoribonuclease YbeY of Spiroplasma citri.